Here is an 85-residue protein sequence, read N- to C-terminus: Putative membrane protein insertion efficiency factor (85 aa).

A disordered region spans residues 62-85 (KGGFDPVPLKKDKSASKHSHKHNH).

It belongs to the UPF0161 family.

The protein localises to the cell membrane. In terms of biological role, could be involved in insertion of integral membrane proteins into the membrane. The protein is Putative membrane protein insertion efficiency factor of Staphylococcus aureus (strain Mu3 / ATCC 700698).